We begin with the raw amino-acid sequence, 1029 residues long: Protein STABILIZED1 (1029 aa).

In terms of domain architecture, Ubiquitin-like spans 1-85 (MVFLSIPNGK…VIIHVLLLGG (85 aa)). Gly-85 participates in a covalent cross-link: Glycyl lysine isopeptide (Gly-Lys) (interchain with K-? in acceptor proteins). The disordered stretch occupies residues 142–170 (AAPGVGRGAGKPSEAEAEDDEEAEEKRYD). A coiled-coil region spans residues 210-243 (DSRRKDRREAKLKEEIEKYRASNPKITEQFADLK). HAT repeat units follow at residues 367 to 399 (YDRN…VEEV), 401 to 431 (GKIK…CRLA), 432 to 462 (NPED…KLEH), 463 to 494 (DVEN…LANE), 496 to 524 (DARI…LETY), 526 to 554 (ESKK…LEEA), 639 to 671 (GSIE…LEKS), 673 to 705 (GSRE…EKWL), 707 to 739 (GDVP…LEFE), 741 to 772 (KEPE…VERE), 774 to 806 (GNVE…LEER), 808 to 840 (KHLE…LEEK), 842 to 874 (NGLN…AELR), 876 to 908 (DNKR…MAPR), and 940 to 972 (KKVE…FELQ). A TPR 1 repeat occupies 625 to 658 (KRTWVADADECKKRGSIETARAIYAHALSVFLTK). One copy of the TPR 2 repeat lies at 794–827 (FKLWLMLGQLEERFKHLEQARKAYDTGLKHCPHC). One copy of the TPR 3 repeat lies at 926-959 (PHVTIAVAKLFWQDKKVEKARAWFERAVTVGPDI).

In terms of assembly, component of a pre-mRNA splicing complex. Interacts with ZOP1. Interacts with PRP31. As to expression, ubiquitous.

The protein resides in the nucleus. It is found in the cajal body. Pre-mRNA splicing factor required for splicing and for the turnover of unstable transcripts. May be a U5 snRNP-associated protein involved in the formation of U4/U6-U5 tri-snRNP. Involved in responses to abiotic stresses. Involved in microRNAs (miRNAs) biogenesis by functioning in primary miRNAs (pri-miRNAs) splicing. Required for DNA methylation and transcriptional silencing through the RNA-directed DNA methylation (RdDM) pathway. In Arabidopsis thaliana (Mouse-ear cress), this protein is Protein STABILIZED1 (STA1).